A 413-amino-acid polypeptide reads, in one-letter code: Paxillin homolog 1 (413 aa).

Over residues 33–45 (HISDRRSQSRDDF) the composition is skewed to basic and acidic residues. The interval 33–157 (HISDRRSQSR…PLHSDSMIGT (125 aa)) is disordered. Polar residues predominate over residues 49–69 (YDLQGNLNTQSVSNGNITTSP). A compositionally biased stretch (basic and acidic residues) spans 73–92 (RSSEGKDYSKSQERIYENES). The span at 118–143 (ASSSRKSLGPPSQAQSYSDVRSNGRS) shows a compositional bias: polar residues. 4 LIM zinc-binding domains span residues 174–232 (GDCA…NQFS), 233–292 (PKCQ…LFAP), 293–350 (KCNG…ESRG), and 351–410 (SICS…TYAL).

Belongs to the paxillin family. Isoform a: Expressed in all 95 body wall muscle cells as well as in the pharyngeal muscle cells (at protein level). Isoform c: Expressed in the body wall muscle cells and in the pharyngeal muscle cells.

It is found in the cell junction. The protein resides in the adherens junction. It localises to the cell membrane. Its subcellular location is the cytoplasm. The protein localises to the myofibril. It is found in the sarcomere. The protein resides in the m line. It localises to the cell projection. Its subcellular location is the podosome. Required for myofilament organization of the pharyngeal sarcomeres and for pharyngeal muscle contractions and hence for pharyngeal pumping. Together with lin-8, might be required for myofilament organization in the body wall muscles. This is Paxillin homolog 1 (pxl-1) from Caenorhabditis elegans.